The following is a 281-amino-acid chain: Para-Rep C1 (281 aa).

The CRESS-DNA virus Rep endonuclease domain occupies 3-97; it reads TLQGTFWCFT…VAGPWTYGEL (95 aa). Positions 10–13 match the RCR-1 motif; the sequence is CFTL. Residues Glu-36 and His-42 each contribute to the a divalent metal cation site. An RCR-2 motif is present at residues 42-44; that stretch reads HLQ. The Nuclear localization signal signature appears at 51 to 71; the sequence is KRSTLKMMKELLPGAHLEVSK. Tyr-80 (for DNA cleavage activity) is an active-site residue. An RCR-3 motif is present at residues 80–83; the sequence is YAMK. Glu-85 contributes to the a divalent metal cation binding site. A Nuclear localization signal motif is present at residues 97–103; it reads LLKKGSN. 173–181 lines the ATP pocket; sequence GPQGGEGKT.

This sequence belongs to the nanoviridea/circoviridae replication-associated protein family. Homooligomer (Potential). Rep binds to repeated DNA motifs (iterons). The cofactor is Mg(2+). Mn(2+) serves as cofactor.

Its subcellular location is the host nucleus. The enzyme catalyses ATP + H2O = ADP + phosphate + H(+). Its function is as follows. Initiates and terminates the replication only of its own subviral DNA molecule. The closed circular ssDNA genome is first converted to a superhelical dsDNA. Rep binds a specific hairpin at the genome origin of replication. Introduces an endonucleolytic nick within the intergenic region of the genome, thereby initiating the rolling circle replication (RCR). Following cleavage, binds covalently to the 5'-phosphate of DNA as a tyrosyl ester. The cleavage gives rise to a free 3'-OH that serves as a primer for the cellular DNA polymerase. The polymerase synthesizes the (+) strand DNA by rolling circle mechanism. After one round of replication, a Rep-catalyzed nucleotidyl transfer reaction releases a circular single-stranded virus genome, thereby terminating the replication. Displays origin-specific DNA cleavage, nucleotidyl transferase, ATPase and helicase activities. The sequence is that of Para-Rep C1 (C1) from Milk vetch dwarf C1 alphasatellite (MVDC1A).